Here is a 265-residue protein sequence, read N- to C-terminus: Undecaprenyl-diphosphatase (265 aa).

The next 8 helical transmembrane spans lie at 1 to 21 (MDFIHILALAILQGLTEFLPI), 39 to 61 (QGLAFDVAVHLGTLVAVISYFRL), 85 to 105 (LAWAVLLGTLPVGLVGIMLTE), 115 to 135 (LIIAWSTVGFGFLLAYADWAG), 149 to 169 (ILFIGLAQALALIPGTSRSGI), 187 to 207 (FSFLLAIPVILLAGGLAALDL), 218 to 238 (ALALGALISGLCAYACIHYFF), and 244 to 264 (IGMLPFAVYRLLLGALLFYLF).

It belongs to the UppP family.

It localises to the cell inner membrane. It catalyses the reaction di-trans,octa-cis-undecaprenyl diphosphate + H2O = di-trans,octa-cis-undecaprenyl phosphate + phosphate + H(+). Its function is as follows. Catalyzes the dephosphorylation of undecaprenyl diphosphate (UPP). Confers resistance to bacitracin. The protein is Undecaprenyl-diphosphatase of Nitrosococcus oceani (strain ATCC 19707 / BCRC 17464 / JCM 30415 / NCIMB 11848 / C-107).